We begin with the raw amino-acid sequence, 319 residues long: tRNA (guanine(9)-N(1))-methyltransferase Trmt10A (319 aa).

Disordered stretches follow at residues 16–87 and 275–319; these read LSLN…KRQL and AKIT…SLDS. Positions 17–33 are enriched in polar residues; sequence SLNNCPGTTPGTPMSKN. The short motif at 35–42 is the Nuclear localization signal element; the sequence is LKKQRKLA. 3 stretches are compositionally biased toward basic and acidic residues: residues 40-58, 78-87, and 276-302; these read KLAE…EREK, SRKELKKRQL, and KITD…ESDK. Positions 44–67 form a coiled coil; it reads FAELRKLRREREREKKKQKRREAK. The SAM-dependent MTase TRM10-type domain occupies 83–274; it reads KKRQLADGGK…ETIPMRKGAK (192 aa).

This sequence belongs to the class IV-like SAM-binding methyltransferase superfamily. TRM10 family.

The protein localises to the nucleus. It is found in the nucleolus. It localises to the chromosome. The catalysed reaction is guanosine(9) in tRNA + S-adenosyl-L-methionine = N(1)-methylguanosine(9) in tRNA + S-adenosyl-L-homocysteine + H(+). In terms of biological role, S-adenosyl-L-methionine-dependent guanine N(1)-methyltransferase that catalyzes the formation of N(1)-methylguanine at position 9 (m1G9) in tRNAs. Modulates Mettl3-mediated N6-methyladenosine (m6A) methylation of mRNA 5'-UTRs and 3'-UTRs independent of its methyltransferase activity; influences mRNA stability and protein levels, in particular of Hsp70 chaperone proteins and other stress response proteins. Also regulates stability of transcripts encoding proteins involved in signaling processes and proteins involved in neurogenesis and axon guidance pathways. This chain is tRNA (guanine(9)-N(1))-methyltransferase Trmt10A, found in Drosophila melanogaster (Fruit fly).